The following is an 833-amino-acid chain: Vacuolar protein sorting-associated protein 16 homolog (833 aa).

Belongs to the VPS16 family. Component of the homotypic fusion and vacuole protein sorting (HOPS) complex, composed of Vps16A, car/Vps33A, dor/Vps18, Vps39, Vps11 and lt/Vps41. Interacts with Syx17 (via SNARE domain); the interaction may involve multiple components of the HOPS complex and may promote assembly of the Syx17-Snap29-Vamp7 trans-SNARE complex. Component of the class C core vacuole/endosome tethering (CORVET) complex composed of at least Vps8, dor/Vps18, car/Vps33A and Vps16A; unlike in other species, Vps11 is not part of the Drosophila complex. Due to the reduced number of components the Drosophila CORVET complex is often referred to as the miniCORVET complex. The tethering complex core made up of Vps16A, car/Vps33A and dor/Vps18 and shared by both HOPS and CORVET, preferentially associates with CORVET-specific Vps8 over HOPS-specific lt/Vps41. Interacts with Rab2 (GTP-bound form).

Its subcellular location is the late endosome membrane. The protein resides in the lysosome membrane. It is found in the cytoplasmic vesicle. The protein localises to the autophagosome. Functionally, core component of the class C core vacuole/endosome tethering (CORVET) and the homotypic fusion and vacuole protein sorting (HOPS) tethering complexes involved in endo-lysosomal vesicle trafficking and lysosome biogenesis. The CORVET complex facilitates docking and fusion of endosomal vesicles during endosome maturation, acts upstream of HOPS, but is not involved in autophagic flux. The CORVET complex may cooperate with the early endosomal tether Rbsn-5 to mediate endosomal fusion. The HOPS complex facilitates docking and fusion of lysosomes with late endosomes and several other types of vesicles. The HOPS complex is also involved in autophagy and crinophagy (the elimination of unused secretory granules through their fusion with lysosomes). The HOPS complex mediates autophagocitic flux, probably by binding autophagosome-associated Syx17/syntaxin 17, promoting assembly of the trans-SNARE complex and instigating autophagosome-lysosome fusion. Independent of Syx17/syntaxin 17, HOPS is involved in biosynthetic transport to lysosomes and lysosome-related organelles such as eye-pigment granules. Required for endocytic degradation of boss/bride of sevenless and N/Notch in developing ommatidia. This is Vacuolar protein sorting-associated protein 16 homolog from Drosophila melanogaster (Fruit fly).